The sequence spans 200 residues: Probable GTP-binding protein EngB (200 aa).

Residues 26-200 (SIPEVALAGR…IYEIAQCIKK (175 aa)) enclose the EngB-type G domain. GTP is bound by residues 34–41 (GRSNVGKS), 61–65 (GCTRQ), 80–83 (DLPG), 147–150 (TKID), and 179–181 (VSS). Residues S41 and T63 each coordinate Mg(2+).

This sequence belongs to the TRAFAC class TrmE-Era-EngA-EngB-Septin-like GTPase superfamily. EngB GTPase family. Mg(2+) is required as a cofactor.

Necessary for normal cell division and for the maintenance of normal septation. This chain is Probable GTP-binding protein EngB, found in Ehrlichia ruminantium (strain Welgevonden).